Reading from the N-terminus, the 338-residue chain is Phenylalanine--tRNA ligase alpha subunit (338 aa).

Residue Glu253 participates in Mg(2+) binding.

The protein belongs to the class-II aminoacyl-tRNA synthetase family. Phe-tRNA synthetase alpha subunit type 1 subfamily. In terms of assembly, tetramer of two alpha and two beta subunits. Mg(2+) serves as cofactor.

It is found in the cytoplasm. The catalysed reaction is tRNA(Phe) + L-phenylalanine + ATP = L-phenylalanyl-tRNA(Phe) + AMP + diphosphate + H(+). The sequence is that of Phenylalanine--tRNA ligase alpha subunit from Citrifermentans bemidjiense (strain ATCC BAA-1014 / DSM 16622 / JCM 12645 / Bem) (Geobacter bemidjiensis).